The chain runs to 317 residues: MENENLKVEQATTAENNMAEKADDSKASKEVKPTIVSREKLLEAGTYFGHKKSMWNPKMKEFLYPQSKRGMHMINTNVTLQRLEFAYNILNKFVAKNPRTTFIFVGTKKQAKDTIKDNALRTGSFYVSERWLGGTLTNASTIFKRVKVMEELEAQAAKKFQGYTKKEGLIKQKELDKLHKNLDGIRKMQSLPSFMIVADPNVDAIAVKEARSKGVKVIGILDSNSNPDAVDFGIPANDDSAKSITLIMTILADAIATARGGKAKFAYQGDDKVILPEFKTDKTLNPRFMNQRRSFEQNSAEGVKTVEKTTTSTEVAE.

Disordered regions lie at residues 1–30 (MENENLKVEQATTAENNMAEKADDSKASKE) and 293–317 (RSFEQNSAEGVKTVEKTTTSTEVAE). Residues 18–30 (MAEKADDSKASKE) show a composition bias toward basic and acidic residues. Residues 308-317 (KTTTSTEVAE) show a composition bias toward low complexity.

Belongs to the universal ribosomal protein uS2 family.

In Mycoplasmopsis agalactiae (strain NCTC 10123 / CIP 59.7 / PG2) (Mycoplasma agalactiae), this protein is Small ribosomal subunit protein uS2.